The sequence spans 147 residues: Hemoglobin subunit beta (147 aa).

One can recognise a Globin domain in the interval 2–147 (DWTDAERAAI…VVSALGRQYH (146 aa)). 2 residues coordinate heme b: H63 and H92.

This sequence belongs to the globin family. In terms of assembly, heterotetramer of two alpha chains and two beta chains. Red blood cells.

Its function is as follows. Involved in oxygen transport from gills to the various peripheral tissues. The polypeptide is Hemoglobin subunit beta (hbb) (Leiostomus xanthurus (Spot)).